A 364-amino-acid polypeptide reads, in one-letter code: Probable endopolygalacturonase B (364 aa).

The N-terminal stretch at 1 to 20 (MHFFQSSLVAATMGAALVAA) is a signal peptide. A propeptide spanning residues 21–29 (APAADLETR) is cleaved from the precursor. A disulfide bond links Cys-32 and Cys-47. Asn-138 and Asn-141 each carry an N-linked (GlcNAc...) asparagine glycan. 6 PbH1 repeats span residues 159–188 (SDHL…DVGS), 189–210 (STYI…AVNS), 211–231 (GEHI…SIGS), 240–261 (VNDV…RIKT), 269–291 (VTGV…VVQQ), and 303–324 (TNGV…TSSA). Catalysis depends on Asp-203, which acts as the Proton donor. A disulfide bond links Cys-205 and Cys-221. His-225 is an active-site residue. Cys-331 and Cys-336 are joined by a disulfide. N-linked (GlcNAc...) asparagine glycosylation occurs at Asn-338. A disulfide bridge connects residues Cys-355 and Cys-364.

This sequence belongs to the glycosyl hydrolase 28 family.

It localises to the secreted. It catalyses the reaction (1,4-alpha-D-galacturonosyl)n+m + H2O = (1,4-alpha-D-galacturonosyl)n + (1,4-alpha-D-galacturonosyl)m.. Its function is as follows. Involved in maceration and soft-rotting of plant tissue. Hydrolyzes the 1,4-alpha glycosidic bonds of de-esterified pectate in the smooth region of the plant cell wall. This chain is Probable endopolygalacturonase B (pgaB), found in Aspergillus fumigatus (strain CBS 144.89 / FGSC A1163 / CEA10) (Neosartorya fumigata).